Reading from the N-terminus, the 417-residue chain is Inhibitor of growth protein 3 (417 aa).

Disordered stretches follow at residues 128 to 203 (TPSQ…YNTN) and 286 to 320 (QTLSSSSTDSRSGRKSKNNNKSSSQQSSSSSSSSS). Positions 136–152 (HHAHSHTPVEKRKHNPS) are enriched in basic residues. Positions 156–168 (GATDHVPEKKFKS) are enriched in basic and acidic residues. Low complexity-rich tracts occupy residues 189-203 (NNNSSSSSNNAYNTN), 286-295 (QTLSSSSTDS), and 307-320 (SSSQQSSSSSSSSS). The PHD-type zinc-finger motif lies at 359-408 (PRYCICNQVSYGEMVGCDNQDCPIEWFHYGCVGLTEAPKGKWYCPQCTAA). Residues cysteine 362, cysteine 364, cysteine 375, cysteine 380, histidine 386, cysteine 389, cysteine 402, and cysteine 405 each coordinate Zn(2+).

Belongs to the ING family. In terms of assembly, interacts with H3K4me3 and to a lesser extent with H3K4me2. Component of the NuA4 histone acetyltransferase complex.

Its subcellular location is the nucleus. Component of the NuA4 histone acetyltransferase (HAT) complex which is involved in transcriptional activation of select genes principally by acetylation of nucleosomal histone H4 and H2A. This modification may both alter nucleosome - DNA interactions and promote interaction of the modified histones with other proteins which positively regulate transcription. NuA4 may also play a direct role in DNA repair when directly recruited to sites of DNA damage. This chain is Inhibitor of growth protein 3 (ING3), found in Gallus gallus (Chicken).